A 367-amino-acid chain; its full sequence is UDP-N-acetylglucosamine--N-acetylmuramyl-(pentapeptide) pyrophosphoryl-undecaprenol N-acetylglucosamine transferase (367 aa).

UDP-N-acetyl-alpha-D-glucosamine is bound by residues 11-13 (TAG), N125, R163, S197, and Q289.

This sequence belongs to the glycosyltransferase 28 family. MurG subfamily.

It is found in the cell membrane. The catalysed reaction is di-trans,octa-cis-undecaprenyl diphospho-N-acetyl-alpha-D-muramoyl-L-alanyl-D-glutamyl-meso-2,6-diaminopimeloyl-D-alanyl-D-alanine + UDP-N-acetyl-alpha-D-glucosamine = di-trans,octa-cis-undecaprenyl diphospho-[N-acetyl-alpha-D-glucosaminyl-(1-&gt;4)]-N-acetyl-alpha-D-muramoyl-L-alanyl-D-glutamyl-meso-2,6-diaminopimeloyl-D-alanyl-D-alanine + UDP + H(+). Its pathway is cell wall biogenesis; peptidoglycan biosynthesis. Its function is as follows. Cell wall formation. Catalyzes the transfer of a GlcNAc subunit on undecaprenyl-pyrophosphoryl-MurNAc-pentapeptide (lipid intermediate I) to form undecaprenyl-pyrophosphoryl-MurNAc-(pentapeptide)GlcNAc (lipid intermediate II). In Clavibacter sepedonicus (Clavibacter michiganensis subsp. sepedonicus), this protein is UDP-N-acetylglucosamine--N-acetylmuramyl-(pentapeptide) pyrophosphoryl-undecaprenol N-acetylglucosamine transferase.